Here is a 512-residue protein sequence, read N- to C-terminus: MLLYFLVVAPLWMLSGLVRAEVWPSFSDEMIYAIRSQRDLMQNISIDQVPLPGLALKNSLPGSITSNETESLTTILSLLHHGIQSFRVDLTFNSSAGEWFLEGTNIRFVKMLNTVNLFVMATNTNLDANILTILLRFDNDTLRNSNAIKEANFTAILEEGLSPGYVYSIADLERDRELNQTLSINGYSDTGWVGLSRFLFDVKKRVVFGFLNGAELFSEDDQDNLVFPPETFHYVTANNITCPLNTVEDIMRVSQIQWRFLEGNFSYENYLHYLECGYSLILTNPIDTRNDSSQGTSLQRHLSSLLLWSWNATAPDDKLDESEDSDDSESSSTSQYVAYRCGAFSYNDYEDLDPFKIGNCYRNLPYLCRFSDRAYFWNISEDTGTYFESDDKDMCPTGYKFGVPRTPLQQRSLRIHLNDMDIDNLDFWIDINSISVSNCWITGGPYASCPYQKYGSRRNYIAMTVPTSAIALVLLLVIFYFNWVHVPIQDNRNNWKRIINAYSKEEVEGVPS.

The signal sequence occupies residues 1 to 20 (MLLYFLVVAPLWMLSGLVRA). Residues 21–460 (EVWPSFSDEM…YQKYGSRRNY (440 aa)) are Extracellular-facing. N43, N67, N93, N139, N152, N179, N239, N264, N290, N311, and N378 each carry an N-linked (GlcNAc...) asparagine glycan. Residues 461–481 (IAMTVPTSAIALVLLLVIFYF) form a helical membrane-spanning segment. Over 482–512 (NWVHVPIQDNRNNWKRIINAYSKEEVEGVPS) the chain is Cytoplasmic.

Belongs to the MTC6 family.

Its subcellular location is the membrane. Its function is as follows. May be involved in telomere capping. The protein is Maintenance of telomere capping protein 6 (MTC6) of Kluyveromyces lactis (strain ATCC 8585 / CBS 2359 / DSM 70799 / NBRC 1267 / NRRL Y-1140 / WM37) (Yeast).